The following is a 202-amino-acid chain: Hypoxanthine-guanine phosphoribosyltransferase (202 aa).

The diphosphate site is built by lysine 66 and glycine 67. The Mg(2+) site is built by glutamate 122 and aspartate 123. Aspartate 126 acts as the Proton acceptor in catalysis. GMP is bound by residues lysine 154, 175 to 176 (FV), and aspartate 182. Position 188 (arginine 188) interacts with diphosphate.

This sequence belongs to the purine/pyrimidine phosphoribosyltransferase family. Mg(2+) serves as cofactor.

Its subcellular location is the cytoplasm. The enzyme catalyses IMP + diphosphate = hypoxanthine + 5-phospho-alpha-D-ribose 1-diphosphate. The catalysed reaction is GMP + diphosphate = guanine + 5-phospho-alpha-D-ribose 1-diphosphate. It participates in purine metabolism; IMP biosynthesis via salvage pathway; IMP from hypoxanthine: step 1/1. Its pathway is purine metabolism; GMP biosynthesis via salvage pathway; GMP from guanine: step 1/1. In terms of biological role, purine salvage pathway enzyme that catalyzes the transfer of the ribosyl-5-phosphate group from 5-phospho-alpha-D-ribose 1-diphosphate (PRPP) to the N9 position of the 6-oxopurines hypoxanthine and guanine to form the corresponding ribonucleotides IMP (inosine 5'-monophosphate) and GMP (guanosine 5'-monophosphate), with the release of PPi. This is Hypoxanthine-guanine phosphoribosyltransferase (hpt) from Mycobacterium tuberculosis (strain CDC 1551 / Oshkosh).